The following is a 285-amino-acid chain: 4-diphosphocytidyl-2-C-methyl-D-erythritol kinase (285 aa).

K11 is an active-site residue. 95–105 (PVAAGIGGGSA) contributes to the ATP binding site. Residue D137 is part of the active site.

The protein belongs to the GHMP kinase family. IspE subfamily.

It carries out the reaction 4-CDP-2-C-methyl-D-erythritol + ATP = 4-CDP-2-C-methyl-D-erythritol 2-phosphate + ADP + H(+). It participates in isoprenoid biosynthesis; isopentenyl diphosphate biosynthesis via DXP pathway; isopentenyl diphosphate from 1-deoxy-D-xylulose 5-phosphate: step 3/6. Its function is as follows. Catalyzes the phosphorylation of the position 2 hydroxy group of 4-diphosphocytidyl-2C-methyl-D-erythritol. The sequence is that of 4-diphosphocytidyl-2-C-methyl-D-erythritol kinase from Paramagnetospirillum magneticum (strain ATCC 700264 / AMB-1) (Magnetospirillum magneticum).